The chain runs to 79 residues: Small ribosomal subunit protein bS16 (79 aa).

This sequence belongs to the bacterial ribosomal protein bS16 family.

The sequence is that of Small ribosomal subunit protein bS16 from Hahella chejuensis (strain KCTC 2396).